Here is a 479-residue protein sequence, read N- to C-terminus: Bifunctional protein HldE (479 aa).

A ribokinase region spans residues 1 to 322 (MLAETQLAPI…AALERTAAQI (322 aa)). 198 to 201 (NRRE) serves as a coordination point for ATP. Asp-267 is a catalytic residue. Residues 350–479 (FTNGCFDLVH…TSSLVAKART (130 aa)) form a cytidylyltransferase region.

It in the N-terminal section; belongs to the carbohydrate kinase PfkB family. The protein in the C-terminal section; belongs to the cytidylyltransferase family. As to quaternary structure, homodimer.

It catalyses the reaction D-glycero-beta-D-manno-heptose 7-phosphate + ATP = D-glycero-beta-D-manno-heptose 1,7-bisphosphate + ADP + H(+). The catalysed reaction is D-glycero-beta-D-manno-heptose 1-phosphate + ATP + H(+) = ADP-D-glycero-beta-D-manno-heptose + diphosphate. The protein operates within nucleotide-sugar biosynthesis; ADP-L-glycero-beta-D-manno-heptose biosynthesis; ADP-L-glycero-beta-D-manno-heptose from D-glycero-beta-D-manno-heptose 7-phosphate: step 1/4. It participates in nucleotide-sugar biosynthesis; ADP-L-glycero-beta-D-manno-heptose biosynthesis; ADP-L-glycero-beta-D-manno-heptose from D-glycero-beta-D-manno-heptose 7-phosphate: step 3/4. In terms of biological role, catalyzes the phosphorylation of D-glycero-D-manno-heptose 7-phosphate at the C-1 position to selectively form D-glycero-beta-D-manno-heptose-1,7-bisphosphate. Catalyzes the ADP transfer from ATP to D-glycero-beta-D-manno-heptose 1-phosphate, yielding ADP-D-glycero-beta-D-manno-heptose. The chain is Bifunctional protein HldE from Azorhizobium caulinodans (strain ATCC 43989 / DSM 5975 / JCM 20966 / LMG 6465 / NBRC 14845 / NCIMB 13405 / ORS 571).